A 380-amino-acid chain; its full sequence is Queuine tRNA-ribosyltransferase (380 aa).

Aspartate 93 functions as the Proton acceptor in the catalytic mechanism. Substrate contacts are provided by residues 93-97 (DSGGF), aspartate 147, glutamine 198, and glycine 225. Positions 256 to 262 (GVGLPSN) are RNA binding. The active-site Nucleophile is aspartate 275. Positions 280–284 (ARNGR) are RNA binding; important for wobble base 34 recognition. Zn(2+)-binding residues include cysteine 313, cysteine 315, cysteine 318, and histidine 344.

Belongs to the queuine tRNA-ribosyltransferase family. Homodimer. Within each dimer, one monomer is responsible for RNA recognition and catalysis, while the other monomer binds to the replacement base PreQ1. The cofactor is Zn(2+).

The enzyme catalyses 7-aminomethyl-7-carbaguanine + guanosine(34) in tRNA = 7-aminomethyl-7-carbaguanosine(34) in tRNA + guanine. Its pathway is tRNA modification; tRNA-queuosine biosynthesis. Catalyzes the base-exchange of a guanine (G) residue with the queuine precursor 7-aminomethyl-7-deazaguanine (PreQ1) at position 34 (anticodon wobble position) in tRNAs with GU(N) anticodons (tRNA-Asp, -Asn, -His and -Tyr). Catalysis occurs through a double-displacement mechanism. The nucleophile active site attacks the C1' of nucleotide 34 to detach the guanine base from the RNA, forming a covalent enzyme-RNA intermediate. The proton acceptor active site deprotonates the incoming PreQ1, allowing a nucleophilic attack on the C1' of the ribose to form the product. After dissociation, two additional enzymatic reactions on the tRNA convert PreQ1 to queuine (Q), resulting in the hypermodified nucleoside queuosine (7-(((4,5-cis-dihydroxy-2-cyclopenten-1-yl)amino)methyl)-7-deazaguanosine). The chain is Queuine tRNA-ribosyltransferase from Clostridium perfringens (strain ATCC 13124 / DSM 756 / JCM 1290 / NCIMB 6125 / NCTC 8237 / Type A).